Reading from the N-terminus, the 28-residue chain is uncharacterized protein (28 aa).

It is found in the cell inner membrane. This is an uncharacterized protein from Escherichia coli (strain K12).